A 173-amino-acid polypeptide reads, in one-letter code: Lens fiber membrane intrinsic protein (173 aa).

Topologically, residues 1 to 3 (MYS) are cytoplasmic. Residues 4–24 (FMGGGLFCAWVGTILLVVATA) traverse the membrane as a helical segment. Topologically, residues 25-66 (TDHWMQYRLSGSFAHQGLWRYCLGNKCFLQTESIAYWNATRA) are extracellular. C-linked (Man) tryptophan glycans are attached at residues Trp-43 and Trp-61. An N-linked (GlcNAc...) asparagine glycan is attached at Asn-62. Residues 67-87 (FMILSALCATSGIIMGVLAFA) form a helical membrane-spanning segment. The Cytoplasmic segment spans residues 88 to 98 (QQSTFTRLSRP). Residues 99–119 (FSAGIMFFASTLFVLLALAIY) traverse the membrane as a helical segment. The Extracellular portion of the chain corresponds to 120–140 (TGVTVSFLGRRFGDWRFSWSY). The chain crosses the membrane as a helical span at residues 141 to 161 (ILGWVALLMTFFAGIFYMCAY). The Cytoplasmic portion of the chain corresponds to 162-173 (RMHECRRLATPR). Thr-171 bears the Phosphothreonine mark.

It belongs to the PMP-22/EMP/MP20 family. Seems to be associated with itself or another lens membrane component via disulfide bonds.

It localises to the membrane. Its function is as follows. Present in the thicker 16-17 nm junctions of mammalian lens fiber cells, where it may contribute to cell junctional organization. Acts as a receptor for calmodulin. May play an important role in both lens development and cataractogenesis. This Mus musculus (Mouse) protein is Lens fiber membrane intrinsic protein (Lim2).